A 196-amino-acid chain; its full sequence is Phosphoheptose isomerase (196 aa).

One can recognise an SIS domain in the interval L34–G193. N49 to G51 is a substrate binding site. Residues H58 and E62 each contribute to the Zn(2+) site. Residues E62, N91–D92, S117–S119, S122, and Q169 contribute to the substrate site. Zn(2+)-binding residues include Q169 and H177.

This sequence belongs to the SIS family. GmhA subfamily. As to quaternary structure, homotetramer. Zn(2+) is required as a cofactor.

It localises to the cytoplasm. The catalysed reaction is 2 D-sedoheptulose 7-phosphate = D-glycero-alpha-D-manno-heptose 7-phosphate + D-glycero-beta-D-manno-heptose 7-phosphate. The protein operates within carbohydrate biosynthesis; D-glycero-D-manno-heptose 7-phosphate biosynthesis; D-glycero-alpha-D-manno-heptose 7-phosphate and D-glycero-beta-D-manno-heptose 7-phosphate from sedoheptulose 7-phosphate: step 1/1. Functionally, catalyzes the isomerization of sedoheptulose 7-phosphate in D-glycero-D-manno-heptose 7-phosphate. This is Phosphoheptose isomerase from Trichlorobacter lovleyi (strain ATCC BAA-1151 / DSM 17278 / SZ) (Geobacter lovleyi).